The sequence spans 330 residues: DNA-directed RNA polymerase I subunit RPA43 (330 aa).

The disordered stretch occupies residues 251-330 (ADVTDVTPQE…ANFESPKKRQ (80 aa)). Ser306, Ser318, and Ser325 each carry phosphoserine. Over residues 317–330 (HSEEANFESPKKRQ) the composition is skewed to basic and acidic residues.

This sequence belongs to the eukaryotic RPA43 RNA polymerase subunit family. In terms of assembly, component of the RNA polymerase I (Pol I) complex consisting of 13 subunits: a ten-subunit catalytic core composed of POLR1A/RPA1, POLR1B/RPA2, POLR1C/RPAC1, POLR1D/RPAC2, POLR1H/RPA12, POLR2E/RPABC1, POLR2F/RPABC2, POLR2H/RPABC3, POLR2K/RPABC4 and POLR2L/RPABC5; a mobile stalk subunit POLR1F/RPA43 protruding from the core and additional subunits homologous to general transcription factors POLR1E/RPA49 and POLR1G/RPA34. Interacts with RRN3/TIF-IA. Interacts with RRN3/TIF-IA. As to expression, widely expressed.

It localises to the nucleus. It is found in the nucleolus. Functionally, component of RNA polymerase I (Pol I), a DNA-dependent RNA polymerase which synthesizes ribosomal RNA precursors using the four ribonucleoside triphosphates as substrates. Through its association with RRN3/TIF-IA may be involved in recruitment of Pol I to rDNA promoters. This chain is DNA-directed RNA polymerase I subunit RPA43, found in Mus musculus (Mouse).